The sequence spans 199 residues: NADH-ubiquinone oxidoreductase chain 6 (199 aa).

The next 5 helical transmembrane spans lie at 1-21 (MILF…VIRA), 27-47 (SVLF…LLGL), 49-69 (FFAM…FLFV), 87-107 (YLPV…LMVD), and 150-170 (FFLF…AIVL).

Belongs to the complex I subunit 6 family.

The protein resides in the mitochondrion membrane. The enzyme catalyses a ubiquinone + NADH + 5 H(+)(in) = a ubiquinol + NAD(+) + 4 H(+)(out). Its function is as follows. Core subunit of the mitochondrial membrane respiratory chain NADH dehydrogenase (Complex I) that is believed to belong to the minimal assembly required for catalysis. Complex I functions in the transfer of electrons from NADH to the respiratory chain. The immediate electron acceptor for the enzyme is believed to be ubiquinone. The chain is NADH-ubiquinone oxidoreductase chain 6 (ND6) from Marchantia polymorpha (Common liverwort).